We begin with the raw amino-acid sequence, 522 residues long: Gypsy retrotransposon integrase-like protein 1 (522 aa).

The Integrase catalytic domain occupies 135 to 292; it reads KVENPWSLVT…TPYFQMFSRN (158 aa). The residue at position 502 (Ser-502) is a Phosphoserine.

In Pongo abelii (Sumatran orangutan), this protein is Gypsy retrotransposon integrase-like protein 1 (GIN1).